Consider the following 394-residue polypeptide: MATAQLQRTPMSALVFPNKISTEHQSLVLVKRLLAVSVSCITYLRGIFPECAYGTRYLDDLCVKILREDKNCPGSTQLVKWMLGCYDALQKKYLRMVVLAVYTNPEDPQTISECYQFKFKYTNNGPLMDFISKNQSNESSMSSTDTKKASILLIRKIYILMQNLGPLPNDVCLTMKLFYYDEVTPPDYQPPGFKDGDCEGVIFEGEPMYLNVGEVSTPFHIFKVKVTTERERMENIDSTILSPKQIKTPFQKILRDKDVEDEQEHYTSDDLDMETKMEEQEKNPASSELGEPSLVCEEDEIMRSKESPDLSISHSQVEQLVNKTSELDMSESKTRSGKVFQNKMANGNQPVKSSKENRKRSQHESGRRVLHHFDSSSQESVPKRRKFSEPKEHI.

Positions 24 to 226 constitute an HORMA domain; it reads HQSLVLVKRL…TPFHIFKVKV (203 aa). A disordered region spans residues 252-394; sequence KILRDKDVED…RKFSEPKEHI (143 aa). Residues 253–282 are compositionally biased toward basic and acidic residues; that stretch reads ILRDKDVEDEQEHYTSDDLDMETKMEEQEK. Polar residues-rich tracts occupy residues 310–324 and 343–352; these read LSIS…VNKT and KMANGNQPVK. The span at 362–374 shows a compositional bias: basic and acidic residues; sequence QHESGRRVLHHFD. Ser376 carries the post-translational modification Phosphoserine. A Nuclear localization signal motif is present at residues 383 to 386; that stretch reads KRRK.

As to quaternary structure, interacts with HORMAD2. Interacts with IHO1. Phosphorylated at Ser-377 in a SPO11-dependent manner.

Its subcellular location is the nucleus. It is found in the chromosome. In terms of biological role, plays a key role in meiotic progression. Regulates 3 different functions during meiosis: ensures that sufficient numbers of processed DNA double-strand breaks (DSBs) are available for successful homology search by increasing the steady-state numbers of single-stranded DSB ends. Promotes synaptonemal-complex formation independently of its role in homology search. Plays a key role in the male mid-pachytene checkpoint and the female meiotic prophase checkpoint: required for efficient build-up of ATR activity on unsynapsed chromosome regions, a process believed to form the basis of meiotic silencing of unsynapsed chromatin (MSUC) and meiotic prophase quality control in both sexes. This Macaca fascicularis (Crab-eating macaque) protein is HORMA domain-containing protein 1 (HORMAD1).